The sequence spans 217 residues: Peptide methionine sulfoxide reductase MsrA (217 aa).

C54 is an active-site residue.

It belongs to the MsrA Met sulfoxide reductase family.

It catalyses the reaction L-methionyl-[protein] + [thioredoxin]-disulfide + H2O = L-methionyl-(S)-S-oxide-[protein] + [thioredoxin]-dithiol. The enzyme catalyses [thioredoxin]-disulfide + L-methionine + H2O = L-methionine (S)-S-oxide + [thioredoxin]-dithiol. Functionally, has an important function as a repair enzyme for proteins that have been inactivated by oxidation. Catalyzes the reversible oxidation-reduction of methionine sulfoxide in proteins to methionine. The sequence is that of Peptide methionine sulfoxide reductase MsrA from Maricaulis maris (strain MCS10) (Caulobacter maris).